A 238-amino-acid polypeptide reads, in one-letter code: Protein lifeguard 4 (238 aa).

At 1–38 the chain is on the cytoplasmic side; it reads MADTDPGYPRSSIEDDFNYGSCVASASVHIRMAFLRKV. A helical membrane pass occupies residues 39–59; that stretch reads YSILSLQVLLTTVTSALFLYF. Over 60-68 the chain is Lumenal; sequence QALRTFVHE. Residues 69–89 traverse the membrane as a helical segment; the sequence is SPALIVVFALGSLGLIFALTL. Residues 90 to 97 are Cytoplasmic-facing; the sequence is HRHTHPLN. A helical membrane pass occupies residues 98-118; it reads LYLLFAFTLSESLAVAAVVTF. Residues 119-120 are Lumenal-facing; sequence YD. The helical transmembrane segment at 121–141 threads the bilayer; it reads VYLVLQAFIMTTAVFLGLTAY. The Cytoplasmic segment spans residues 142–151; the sequence is TLQSKRDFTK. A helical transmembrane segment spans residues 152-172; sequence FGAGLFAGLWILCLAGFLKLF. Topologically, residues 173–175 are lumenal; that stretch reads FYS. The chain crosses the membrane as a helical span at residues 176–196; that stretch reads ETMELVLASLGALLFCGFIIY. Topologically, residues 197–208 are cytoplasmic; it reads DTHSLMHRLSPE. The segment at residues 209-229 is an intramembrane region (helical); that stretch reads EYVIAAISLYMDIINLFLHLL. Topologically, residues 230 to 238 are cytoplasmic; it reads KFLEAVNKK.

This sequence belongs to the BI1 family. LFG subfamily. Interacts with ITPR3.

The protein resides in the golgi apparatus membrane. Functionally, anti-apoptotic protein which can inhibit apoptosis induced by intrinsic and extrinsic apoptotic stimuli. Can modulate both capacitative Ca2+ entry and inositol 1,4,5-trisphosphate (IP3)-mediated Ca2+ release. The sequence is that of Protein lifeguard 4 (Tmbim4) from Mus musculus (Mouse).